We begin with the raw amino-acid sequence, 432 residues long: MSNNVVVLGTQWGDEGKGKIVDLLTERAKYVVRYQGGHNAGHTLVIDGEKTVLHLIPSGILRENVVSIIANGVVLSPEALMKEMTQLEERGIPVRSRLLLSEACPLILPYHIALDNAREKARGEKAIGTTGRGIGPAYEDKVARRGLRVGDLFDKKAFAQKLKEIIEYHNFQLVNYYKVEPVDYQKTLDDIMAIADILTGMVVDVSDLLYKATQKGELVMFEGAQGTLLDIDHGTYPYVTSSNTTAGGVATGSGLGPRYVGYVLGIIKAYSTRVGAGPFPTELFDETGDFLREKGQEFGATTGRSRRTGWLDIIAIRRAVQINSLSGFCMTKLDVLDGLKEVKVCVGYRLPNGEVIETTPLAADDWEGIEPIYESMPGWNESTFGVKDKAQLPQAALNYIKRVEELTGVPVDIVSTGPDRSETIILRHPFDA.

Residues 13-19 and 41-43 contribute to the GTP site; these read GDEGKGK and GHT. Catalysis depends on aspartate 14, which acts as the Proton acceptor. Positions 14 and 41 each coordinate Mg(2+). Residues 14–17, 39–42, threonine 130, arginine 144, glutamine 225, threonine 240, and arginine 304 each bind IMP; these read DEGK and NAGH. Histidine 42 functions as the Proton donor in the catalytic mechanism. Substrate is bound at residue 300 to 306; the sequence is ATTGRSR. GTP-binding positions include arginine 306, 332–334, and 415–417; these read KLD and STG.

Belongs to the adenylosuccinate synthetase family. As to quaternary structure, homodimer. It depends on Mg(2+) as a cofactor.

It localises to the cytoplasm. The enzyme catalyses IMP + L-aspartate + GTP = N(6)-(1,2-dicarboxyethyl)-AMP + GDP + phosphate + 2 H(+). It functions in the pathway purine metabolism; AMP biosynthesis via de novo pathway; AMP from IMP: step 1/2. In terms of biological role, plays an important role in the de novo pathway of purine nucleotide biosynthesis. Catalyzes the first committed step in the biosynthesis of AMP from IMP. This Proteus mirabilis (strain HI4320) protein is Adenylosuccinate synthetase.